The primary structure comprises 485 residues: MALLVEKTTSGREYKVKDMSQADFGRLEIELAEVEMPGLMASRSEFGPSQPFKGAKITGSLHMTIQTAVLIETLTALGAEVRWCSCNIFSTQDHAAAAIARDSAAVFAWKGETLQEYWWCTERALDWGPGGGPDLIVDDGGDTTLLIHEGVKAEEIYEKSGQFPDPDSTDNAEFKIVLSIIKEGLKTDPKRYHKMKDRVVGVSEETTTGVKRLYQMQANGTLLFPAINVNDSVTKSKFDNLYGCRHSLPDGLMRATDVMIAGKVAVVAGYGDVGKGCAAALKQAGARVIVTEIDPICALQATMEGLQVLTLEDVVSEADIFVTTTGNKDIIMLDHMKKMKNNAIVCNIGHFDNEIDMLGLETHPGVKRITIKPQTDRWVFPETNTGIIILAEGRLMNLGCATGHPSFVMSCSFTNQVIAQLELWNEKSSGKYEKKVYVLPKHLDEKVAALHLEKLGAKLTKLSKDQADYISVPVEGPYKPFHYRY.

3 residues coordinate substrate: Thr-64, Asp-139, and Glu-205. 206-208 contributes to the NAD(+) binding site; sequence TTT. Residues Lys-235 and Asp-239 each contribute to the substrate site. Residues Asn-240, 269–274, Glu-292, Asn-327, 348–350, and Asn-397 contribute to the NAD(+) site; these read GYGDVG and IGH.

This sequence belongs to the adenosylhomocysteinase family. NAD(+) is required as a cofactor.

It catalyses the reaction S-adenosyl-L-homocysteine + H2O = L-homocysteine + adenosine. The protein operates within amino-acid biosynthesis; L-homocysteine biosynthesis; L-homocysteine from S-adenosyl-L-homocysteine: step 1/1. In terms of biological role, adenosylhomocysteine is a competitive inhibitor of S-adenosyl-L-methionine-dependent methyl transferase reactions; therefore adenosylhomocysteinase may play a key role in the control of methylations via regulation of the intracellular concentration of adenosylhomocysteine. This chain is Adenosylhomocysteinase (SAHH), found in Lupinus luteus (European yellow lupine).